The chain runs to 590 residues: J protein JJJ1 (590 aa).

Residues 3–72 (TCYYELLGVE…RAWYDSHKEQ (70 aa)) enclose the J domain. Residues 269 to 284 (EQRKLKEQQRKNELNN) are compositionally biased toward basic and acidic residues. The tract at residues 269–293 (EQRKLKEQQRKNELNNRRKFGNDNN) is disordered. Residues 338 to 362 (YECFICNKTFKSEKQLKNHINTKLH) form a C2H2-type 1 zinc finger. Ser393 is subject to Phosphoserine. The tract at residues 441–546 (EVEDVSSDEN…TLPSSMSPTS (106 aa)) is disordered. Basic residues predominate over residues 455 to 467 (TKNKKKRKKKKKA). A compositionally biased stretch (basic and acidic residues) spans 480-489 (DDTKDKRSNE). Thr504 carries the post-translational modification Phosphothreonine. The segment covering 513–527 (KAKKKKGKQPKKNSK) has biased composition (basic residues). Residues 528–546 (STKSTPSLSTLPSSMSPTS) show a composition bias toward low complexity. A C2H2-type 2 zinc finger spans residues 549–573 (EVCTTCGESFDSRNKLFNHVKIAGH).

It is found in the nucleus. In Saccharomyces cerevisiae (strain ATCC 204508 / S288c) (Baker's yeast), this protein is J protein JJJ1 (JJJ1).